Here is a 148-residue protein sequence, read N- to C-terminus: Single-stranded DNA-binding protein 2 (148 aa).

Residues 6–108 (MNHITVSGLV…IEAESFGHDL (103 aa)) enclose the SSB domain.

As to quaternary structure, homotetramer.

In Tropheryma whipplei (strain TW08/27) (Whipple's bacillus), this protein is Single-stranded DNA-binding protein 2 (ssb2).